The chain runs to 407 residues: Tyrosine--tRNA ligase (407 aa).

Y35 lines the L-tyrosine pocket. Residues P40–H49 carry the 'HIGH' region motif. 2 residues coordinate L-tyrosine: Y168 and Q172. The 'KMSKS' region motif lies at K228–T232. K231 serves as a coordination point for ATP. The S4 RNA-binding domain occupies N341 to V405.

The protein belongs to the class-I aminoacyl-tRNA synthetase family. TyrS type 1 subfamily. In terms of assembly, homodimer.

It localises to the cytoplasm. It carries out the reaction tRNA(Tyr) + L-tyrosine + ATP = L-tyrosyl-tRNA(Tyr) + AMP + diphosphate + H(+). Functionally, catalyzes the attachment of tyrosine to tRNA(Tyr) in a two-step reaction: tyrosine is first activated by ATP to form Tyr-AMP and then transferred to the acceptor end of tRNA(Tyr). This chain is Tyrosine--tRNA ligase, found in Clostridium botulinum (strain ATCC 19397 / Type A).